Consider the following 242-residue polypeptide: Aspartate/glutamate leucyltransferase (242 aa).

It belongs to the R-transferase family. Bpt subfamily.

It localises to the cytoplasm. The catalysed reaction is N-terminal L-glutamyl-[protein] + L-leucyl-tRNA(Leu) = N-terminal L-leucyl-L-glutamyl-[protein] + tRNA(Leu) + H(+). It carries out the reaction N-terminal L-aspartyl-[protein] + L-leucyl-tRNA(Leu) = N-terminal L-leucyl-L-aspartyl-[protein] + tRNA(Leu) + H(+). Its function is as follows. Functions in the N-end rule pathway of protein degradation where it conjugates Leu from its aminoacyl-tRNA to the N-termini of proteins containing an N-terminal aspartate or glutamate. In Chromobacterium violaceum (strain ATCC 12472 / DSM 30191 / JCM 1249 / CCUG 213 / NBRC 12614 / NCIMB 9131 / NCTC 9757 / MK), this protein is Aspartate/glutamate leucyltransferase.